Here is a 334-residue protein sequence, read N- to C-terminus: Beta-1,3-N-acetylglucosaminyltransferase radical fringe (334 aa).

Topologically, residues 1 to 6 are cytoplasmic; the sequence is MSRVRR. Residues 7 to 29 traverse the membrane as a helical; Signal-anchor for type II membrane protein segment; it reads VLCRACLALAAVLAVLLLLPLPL. Over 30–334 the chain is Lumenal; sequence PLPLPLPRAP…MKNRGKEAFQ (305 aa). Arg77 contributes to the substrate binding site. A glycan (N-linked (GlcNAc...) asparagine) is linked at Asn116. 2 disulfides stabilise this stretch: Cys117–Cys128 and Cys146–Cys210. A substrate-binding site is contributed by Asp150. Asp151 is a Mn(2+) binding site. Asp240 is an active-site residue. Residue His264 participates in Mn(2+) binding. Cys314 and Cys323 are disulfide-bonded.

This sequence belongs to the glycosyltransferase 31 family. The cofactor is Mn(2+). In terms of tissue distribution, most abundantly expressed in adult brain. Expressed in most neurons of the brain but not in glial cells. Also detected to a lower extent in adult lung and kidney.

The protein resides in the golgi apparatus membrane. It carries out the reaction 3-O-(alpha-L-fucosyl)-L-threonyl-[EGF-like domain protein] + UDP-N-acetyl-alpha-D-glucosamine = 3-O-(N-acetyl-beta-D-glucosaminyl-(1-&gt;3)-alpha-L-fucosyl)-L-threonyl-[EGF-like domain protein] + UDP + H(+). The enzyme catalyses 3-O-(alpha-L-fucosyl)-L-seryl-[EGF-like domain protein] + UDP-N-acetyl-alpha-D-glucosamine = 3-O-(N-acetyl-beta-D-glucosaminyl-(1-&gt;3)-alpha-L-fucosyl)-L-seryl-[EGF-like domain protein] + UDP + H(+). Its function is as follows. Glycosyltransferase that initiates the elongation of O-linked fucose residues attached to EGF-like repeats in the extracellular domain of Notch molecules. Modulates NOTCH1 activity by modifying O-fucose residues at specific EGF-like domains resulting in enhancement of NOTCH1 activation by DLL1 and JAG1. Inhibits Notch signaling in postmitotic neurons of the brain. It may play a role in adult brain and in neurogenesis. It may play a role in limb development. The protein is Beta-1,3-N-acetylglucosaminyltransferase radical fringe of Rattus norvegicus (Rat).